Reading from the N-terminus, the 873-residue chain is Outer membrane usher protein FimC (873 aa).

Positions 1–15 are cleaved as a signal peptide; the sequence is MKQIPLILAMSLAFA. A disulfide bridge links Cys815 with Cys838.

It belongs to the fimbrial export usher family.

Its subcellular location is the cell outer membrane. In terms of biological role, probable porin-like protein necessary for the assembly of a pilin-type protein. The chain is Outer membrane usher protein FimC (fimC) from Bordetella pertussis (strain Tohama I / ATCC BAA-589 / NCTC 13251).